A 76-amino-acid polypeptide reads, in one-letter code: Small ribosomal subunit protein bS18 (76 aa).

This sequence belongs to the bacterial ribosomal protein bS18 family. In terms of assembly, part of the 30S ribosomal subunit. Forms a tight heterodimer with protein bS6.

Binds as a heterodimer with protein bS6 to the central domain of the 16S rRNA, where it helps stabilize the platform of the 30S subunit. This Stenotrophomonas maltophilia (strain R551-3) protein is Small ribosomal subunit protein bS18.